The sequence spans 222 residues: Uracil-DNA glycosylase (222 aa).

Aspartate 61 (proton acceptor) is an active-site residue.

Belongs to the uracil-DNA glycosylase (UDG) superfamily. UNG family.

Its subcellular location is the cytoplasm. The catalysed reaction is Hydrolyzes single-stranded DNA or mismatched double-stranded DNA and polynucleotides, releasing free uracil.. Its function is as follows. Excises uracil residues from the DNA which can arise as a result of misincorporation of dUMP residues by DNA polymerase or due to deamination of cytosine. This is Uracil-DNA glycosylase from Aeromonas salmonicida (strain A449).